Here is a 331-residue protein sequence, read N- to C-terminus: 2-hydroxyacid dehydrogenase homolog (331 aa).

NAD(+) is bound by residues 154-155, 232-234, and aspartate 258; these read KI and TSR. Arginine 234 is an active-site residue. Residue glutamate 263 is part of the active site. Histidine 295 (proton donor) is an active-site residue. 295–298 is a binding site for NAD(+); the sequence is HQAF.

This sequence belongs to the D-isomer specific 2-hydroxyacid dehydrogenase family.

This is 2-hydroxyacid dehydrogenase homolog (ddh) from Haemophilus influenzae (strain ATCC 51907 / DSM 11121 / KW20 / Rd).